Consider the following 1141-residue polypeptide: Envelopment polyprotein (1141 aa).

An N-terminal signal peptide occupies residues 1–18; it reads MGRLYLIVLGVLITATAG. At 19 to 483 the chain is on the lumenal side; it reads FPRSVHELKI…HSLAVELCVP (465 aa). Intrachain disulfides connect C30–C158, C64–C164, C113–C135, C140–C145, C182–C192, C217–C253, C242–C357, C382–C441, C386–C395, and C458–C481. Residue N141 is glycosylated (N-linked (GlcNAc...) asparagine; by host). N353 is a glycosylation site (N-linked (GlcNAc...) asparagine; by host). N-linked (GlcNAc...) asparagine; by host glycosylation is present at N405. Residues 484 to 506 traverse the membrane as a helical segment; that stretch reads GIHGWATIALVITFCFGWLLIPT. The Cytoplasmic segment spans residues 507–633; that stretch reads TTMVVLKCLR…LGVFRYKSRC (127 aa). Residues 522-539 form a binding to the ribonucleoprotein region; sequence CSHYSTESKFKVILEKVK. 2 CCHC-type zinc fingers span residues 551 to 571 and 576 to 597; these read CDIC…KKSC and CPYC…YAVC. Binding to the ribonucleoprotein regions lie at residues 594–611, 598–609, and 617–631; these read YAVC…KKSL, KLTGRFHEALKK, and QRGC…RYKS. Residues 617–640 form the ITAM domain; the sequence is QRGCYRTLGVFRYKSRCYVGLVWM. 2 positions are modified to phosphotyrosine: Y621 and Y634. Positions 621–624 match the YxxL motif; it reads YRTL. Residues 634–654 traverse the membrane as a helical segment; sequence YVGLVWMCLLTLELIVWAASA. Residues 655–1110 are Lumenal-facing; the sequence is DTPLLEPGWS…EWLLGILNGN (456 aa). 8 cysteine pairs are disulfide-bonded: C741/C776, C745/C783, C757/C890, C771/C901, C786/C909, C812/C821, C829/C838, and C869/C873. The segment at 763–783 is fusion loop; sequence YQYETSWSCNPPDCPGVGTGC. N-linked (GlcNAc...) asparagine; by host glycosylation occurs at N933. 5 disulfides stabilise this stretch: C975-C1005, C998-C1050, C1015-C1020, C1051-C1056, and C1090-C1094. A helical transmembrane segment spans residues 1111-1131; it reads WVVVAVLVIILLISIFLFSFF. Positions 1127 to 1141 are binding to the ribonucleoprotein; that stretch reads LFSFFCPIRSHKKQL. Over 1132 to 1141 the chain is Cytoplasmic; that stretch reads CPIRSHKKQL.

The protein belongs to the hantavirus envelope glycoprotein family. In terms of assembly, homodimer. Homotetramer; forms heterotetrameric Gn-Gc spikes in the pre-fusion conformation. Interacts (via C-terminus) with the nucleoprotein. Interacts with host TUFM; this interaction contributes to the virus-induced degradation of mitochondria by autophagy, which leads to degradation of host MAVS and inhibition of type I interferon (IFN) responses. Interacts with host MAP1LC3B; this interaction contributes to the virus-induced degradation of mitochondria by autophagy, which leads to degradation of host MAVS and inhibition of type I interferon (IFN) responses. Homodimer. Homotetramer; forms heterotetrameric Gn-Gc spikes in the pre-fusion conformation. Homotrimer; forms homotrimer in the post-fusion conformation at acidic pH. Interacts (via C-terminus) with the nucleoprotein. Post-translationally, envelope polyprotein precursor is quickly cleaved in vivo just after synthesis, presumably by host signal peptidase.

The protein localises to the virion membrane. It localises to the host cell surface. It is found in the host Golgi apparatus membrane. Its subcellular location is the host endoplasmic reticulum membrane. The protein resides in the host mitochondrion. Forms homotetramers with glycoprotein C at the surface of the virion. Attaches the virion to host cell receptors including integrin ITGAV/ITGB3. This attachment induces virion internalization predominantly through clathrin-dependent endocytosis. Mediates the assembly and budding of infectious virus particles through its interaction with the nucleocapsid protein and the viral genome. May dysregulate normal immune and endothelial cell responses through an ITAM motif. Translocates to mitochondria, binds to host TUFM and recruits MAP1LC3B. These interactions induce mitochondrial autophagy and therefore destruction of host MAVS leading to inhibition of type I interferon (IFN) responses. Concomitant breakdown of glycoprotein N is apparently prevented by the nucleoprotein that may inhibit Gn-stimulated autophagosome-lysosome fusion. Interacts with the viral genomic RNA. Functionally, forms homotetramers with glycoprotein N at the surface of the virion. Attaches the virion to host cell receptors including integrin ITGAV/ITGB3. This attachment induces virion internalization predominantly through clathrin-dependent endocytosis. Class II fusion protein that promotes fusion of viral membrane with host endosomal membrane after endocytosis of the virion. The sequence is that of Envelopment polyprotein (GP) from Homo sapiens (Human).